We begin with the raw amino-acid sequence, 43 residues long: U5-hexatoxin-Mr1a (43 aa).

Intrachain disulfides connect Cys1–Cys16, Cys8–Cys21, Cys15–Cys36, and Cys17–Cys43.

This sequence belongs to the neurotoxin 35 family. Contains 4 disulfide bonds. In terms of tissue distribution, expressed by the venom gland.

It localises to the secreted. In terms of biological role, this toxin blocks the neuromuscular transmission, and also acts on muscle. It exerts an effect of first exciting and then inhibiting the contraction of muscle. This toxin is active only against mammals. The chain is U5-hexatoxin-Mr1a from Macrothele raveni (Funnel-web spider).